We begin with the raw amino-acid sequence, 151 residues long: Ribosomal RNA large subunit methyltransferase H (151 aa).

S-adenosyl-L-methionine contacts are provided by residues leucine 73, glycine 100, and 119–124 (LSKMTL).

This sequence belongs to the RNA methyltransferase RlmH family. Homodimer.

The protein localises to the cytoplasm. The enzyme catalyses pseudouridine(1915) in 23S rRNA + S-adenosyl-L-methionine = N(3)-methylpseudouridine(1915) in 23S rRNA + S-adenosyl-L-homocysteine + H(+). Specifically methylates the pseudouridine at position 1915 (m3Psi1915) in 23S rRNA. The chain is Ribosomal RNA large subunit methyltransferase H from Campylobacter lari (strain RM2100 / D67 / ATCC BAA-1060).